The primary structure comprises 194 residues: 3-isopropylmalate dehydratase small subunit (194 aa).

The protein belongs to the LeuD family. LeuD type 1 subfamily. Heterodimer of LeuC and LeuD.

It catalyses the reaction (2R,3S)-3-isopropylmalate = (2S)-2-isopropylmalate. The protein operates within amino-acid biosynthesis; L-leucine biosynthesis; L-leucine from 3-methyl-2-oxobutanoate: step 2/4. Catalyzes the isomerization between 2-isopropylmalate and 3-isopropylmalate, via the formation of 2-isopropylmaleate. This is 3-isopropylmalate dehydratase small subunit from Bacillus cereus (strain ATCC 14579 / DSM 31 / CCUG 7414 / JCM 2152 / NBRC 15305 / NCIMB 9373 / NCTC 2599 / NRRL B-3711).